A 221-amino-acid polypeptide reads, in one-letter code: UPF0502 protein Sputcn32_1644 (221 aa).

It belongs to the UPF0502 family.

The chain is UPF0502 protein Sputcn32_1644 from Shewanella putrefaciens (strain CN-32 / ATCC BAA-453).